A 141-amino-acid polypeptide reads, in one-letter code: Small ribosomal subunit protein uS12 (141 aa).

Residue Asp102 is modified to 3-methylthioaspartic acid. Positions 115 to 141 are disordered; that stretch reads GDASGVEKRRQQRSLYGAKRPKKEASK.

This sequence belongs to the universal ribosomal protein uS12 family. Part of the 30S ribosomal subunit. Contacts proteins S8 and S17. May interact with IF1 in the 30S initiation complex.

In terms of biological role, with S4 and S5 plays an important role in translational accuracy. Its function is as follows. Interacts with and stabilizes bases of the 16S rRNA that are involved in tRNA selection in the A site and with the mRNA backbone. Located at the interface of the 30S and 50S subunits, it traverses the body of the 30S subunit contacting proteins on the other side and probably holding the rRNA structure together. The combined cluster of proteins S8, S12 and S17 appears to hold together the shoulder and platform of the 30S subunit. The polypeptide is Small ribosomal subunit protein uS12 (Ureaplasma parvum serovar 3 (strain ATCC 27815 / 27 / NCTC 11736)).